The following is a 293-amino-acid chain: Mitochondrial glycine transporter (293 aa).

Solcar repeat units follow at residues 6-85 (GGVP…SRSA), 102-186 (LQSY…AKEM), and 208-291 (ASAM…LLKL). 6 helical membrane-spanning segments follow: residues 12 to 37 (LVSGFFGGLASVCALQPLDLLKTRLQ), 60 to 86 (GTLPSALRTSIGSALYLSLLNYSRSAL), 108 to 133 (LLTGALSRAAVGLVTMPITVIKVRYE), 161 to 184 (GAAATTLRDAPYAGLYVLLYEQAK), 212 to 238 (VNGVSAFLSASLATTLTAPFDTIKTRM), and 266 to 284 (GLSLRLCRKAMSACIAWGI).

The protein belongs to the mitochondrial carrier (TC 2.A.29) family. SLC25A38 subfamily.

The protein resides in the mitochondrion inner membrane. It carries out the reaction glycine(in) = glycine(out). Its function is as follows. Mitochondrial glycine transporter that imports glycine into the mitochondrial matrix. Plays an important role in providing glycine for the first enzymatic step in heme biosynthesis, the condensation of glycine with succinyl-CoA to produce 5-aminolevulinate (ALA) in the mitochondrial matrix. This Eremothecium gossypii (strain ATCC 10895 / CBS 109.51 / FGSC 9923 / NRRL Y-1056) (Yeast) protein is Mitochondrial glycine transporter.